The sequence spans 656 residues: Vi polysaccharide export protein VexE (656 aa).

Its function is as follows. May be involved in translocation of the Vi antigen. The polypeptide is Vi polysaccharide export protein VexE (vexE) (Salmonella typhi).